A 186-amino-acid polypeptide reads, in one-letter code: Ribosome-recycling factor (186 aa).

Residues 135-156 (DANDEVKKLQKDKAVSEDEGKK) form a disordered region.

The protein belongs to the RRF family.

Its subcellular location is the cytoplasm. Its function is as follows. Responsible for the release of ribosomes from messenger RNA at the termination of protein biosynthesis. May increase the efficiency of translation by recycling ribosomes from one round of translation to another. The sequence is that of Ribosome-recycling factor from Bdellovibrio bacteriovorus (strain ATCC 15356 / DSM 50701 / NCIMB 9529 / HD100).